The sequence spans 510 residues: NAD(P)H-quinone oxidoreductase subunit 2 B, chloroplastic (510 aa).

The next 14 membrane-spanning stretches (helical) occupy residues 31-51 (FIFPECILIFGLILLLMIDLT), 59-79 (WFYFISSTSLVISITALLFRW), 99-119 (IFQFLILLCSTLCIPLSVEYI), 124-144 (MAITEFLLFVLTATLGGMFLC), 149-169 (LITIFVALECFSLCSYLLSGY), 184-204 (LLMGGASSSILVYGFSWLYGL), 229-249 (ISIALIFITVGLGFKLSLAPF), 261-281 (PTPVVAFLSVTSKVAALALAT), 295-315 (WHLLLEILAILSMILGNLLAI), 323-343 (MLAYSSIGQIGYVIIGIIVGD), 354-374 (YMLFYISMNLGTFACIVLFGL), 395-415 (ALSLALCLLSLGGLPPLAGFF), 418-438 (LYLFWCGWQAGLYFLVSIGLL), and 484-504 (MTVCVIASTILGISMNPILAI).

This sequence belongs to the complex I subunit 2 family. In terms of assembly, NDH is composed of at least 16 different subunits, 5 of which are encoded in the nucleus.

It localises to the plastid. The protein resides in the chloroplast thylakoid membrane. The enzyme catalyses a plastoquinone + NADH + (n+1) H(+)(in) = a plastoquinol + NAD(+) + n H(+)(out). It catalyses the reaction a plastoquinone + NADPH + (n+1) H(+)(in) = a plastoquinol + NADP(+) + n H(+)(out). NDH shuttles electrons from NAD(P)H:plastoquinone, via FMN and iron-sulfur (Fe-S) centers, to quinones in the photosynthetic chain and possibly in a chloroplast respiratory chain. The immediate electron acceptor for the enzyme in this species is believed to be plastoquinone. Couples the redox reaction to proton translocation, and thus conserves the redox energy in a proton gradient. The protein is NAD(P)H-quinone oxidoreductase subunit 2 B, chloroplastic of Hordeum vulgare (Barley).